We begin with the raw amino-acid sequence, 263 residues long: Putative replication protein PDa0002 (263 aa).

The protein is Putative replication protein PDa0002 of Xylella fastidiosa (strain Temecula1 / ATCC 700964).